We begin with the raw amino-acid sequence, 946 residues long: Inter-alpha-trypsin inhibitor heavy chain H2 (946 aa).

A signal peptide spans 1–18 (MQRPVCLLIWLFLLEAQA). The propeptide occupies 19 to 54 (FEIPINGNSEFAEYSDLVELAPDKLPFVQENGRHQR). The 130-residue stretch at 56–185 (LPEESGEETD…KVQFELHYQE (130 aa)) folds into the VIT domain. Ser-60 carries the phosphoserine modification. N-linked (GlcNAc...) asparagine glycans are attached at residues Asn-118 and Asn-263. 2 positions are modified to 4-carboxyglutamate: Glu-282 and Glu-283. The region spanning 308–468 (PKNILFVIDV…YDFLKRLSNE (161 aa)) is the VWFA domain. A glycan (N-linked (GlcNAc...) asparagine) is linked at Asn-445. Position 466 is a phosphoserine (Ser-466). Asp-702 carries the aspartate 1-(chondroitin 4-sulfate)-ester modification. Positions 703–946 (PHFIIYLPKS…PQLYSFLKRP (244 aa)) are excised as a propeptide. Ser-886 bears the Phosphoserine mark.

It belongs to the ITIH family. I-alpha-I plasma protease inhibitors are assembled from one or two heavy chains (HC) and one light chain, bikunin. Inter-alpha-inhibitor (I-alpha-I) is composed of ITIH1/HC1, ITIH2/HC2 and bikunin. In terms of processing, heavy chains are linked to bikunin via chondroitin 4-sulfate esterified to the alpha-carboxyl of the C-terminal aspartate after propeptide cleavage. Post-translationally, phosphorylated by FAM20C in the extracellular medium. Expressed in both liver and brain.

Its subcellular location is the secreted. Functionally, may act as a carrier of hyaluronan in serum or as a binding protein between hyaluronan and other matrix protein, including those on cell surfaces in tissues to regulate the localization, synthesis and degradation of hyaluronan which are essential to cells undergoing biological processes. This is Inter-alpha-trypsin inhibitor heavy chain H2 (Itih2) from Mus musculus (Mouse).